Consider the following 173-residue polypeptide: Co-chaperone protein HscB homolog (173 aa).

One can recognise a J domain in the interval 5–77 (CHFALFDLQP…SQRARYLLAL (73 aa)).

The protein belongs to the HscB family. Interacts with HscA and stimulates its ATPase activity.

Functionally, co-chaperone involved in the maturation of iron-sulfur cluster-containing proteins. Seems to help targeting proteins to be folded toward HscA. This is Co-chaperone protein HscB homolog from Ectopseudomonas mendocina (strain ymp) (Pseudomonas mendocina).